The chain runs to 171 residues: 3-hydroxydecanoyl-[acyl-carrier-protein] dehydratase (171 aa).

His70 is an active-site residue.

This sequence belongs to the thioester dehydratase family. FabA subfamily. Homodimer.

It localises to the cytoplasm. It carries out the reaction a (3R)-hydroxyacyl-[ACP] = a (2E)-enoyl-[ACP] + H2O. The catalysed reaction is (3R)-hydroxydecanoyl-[ACP] = (2E)-decenoyl-[ACP] + H2O. It catalyses the reaction (2E)-decenoyl-[ACP] = (3Z)-decenoyl-[ACP]. It functions in the pathway lipid metabolism; fatty acid biosynthesis. Functionally, necessary for the introduction of cis unsaturation into fatty acids. Catalyzes the dehydration of (3R)-3-hydroxydecanoyl-ACP to E-(2)-decenoyl-ACP and then its isomerization to Z-(3)-decenoyl-ACP. Can catalyze the dehydratase reaction for beta-hydroxyacyl-ACPs with saturated chain lengths up to 16:0, being most active on intermediate chain length. This is 3-hydroxydecanoyl-[acyl-carrier-protein] dehydratase from Pseudomonas aeruginosa (strain LESB58).